The primary structure comprises 425 residues: Na(+)/H(+) antiporter NhaA 1 (425 aa).

11 helical membrane passes run 20 to 40 (AGGV…NSPL), 65 to 85 (PHLW…GLEI), 102 to 122 (LPFI…LAVT), 131 to 151 (GWAI…ALLG), 160 to 180 (LFLT…IALA), 183 to 203 (ASIK…MMAM), 218 to 238 (FVLL…AGVL), 272 to 292 (FLIV…GFSL), 303 to 323 (IAAG…WAAV), 342 to 362 (LSVL…LAFA), and 373 to 393 (LGVI…LRFA).

This sequence belongs to the NhaA Na(+)/H(+) (TC 2.A.33) antiporter family.

The protein localises to the cell inner membrane. The catalysed reaction is Na(+)(in) + 2 H(+)(out) = Na(+)(out) + 2 H(+)(in). In terms of biological role, na(+)/H(+) antiporter that extrudes sodium in exchange for external protons. The protein is Na(+)/H(+) antiporter NhaA 1 of Novosphingobium aromaticivorans (strain ATCC 700278 / DSM 12444 / CCUG 56034 / CIP 105152 / NBRC 16084 / F199).